We begin with the raw amino-acid sequence, 311 residues long: Probable cobalamin biosynthesis protein CobD (311 aa).

4 consecutive transmembrane segments (helical) span residues 53-73, 76-96, 157-177, and 288-308; these read FIFGTLTTISVLFIVFGAIYG, ILINNIQNIYIKYIVYSFLIS, DSIIAPLFYAIFFGLEGAFIY, and FSIDVVIFSFIVLYSIYYVIF.

Belongs to the CobD/CbiB family.

Its subcellular location is the cell membrane. Its pathway is cofactor biosynthesis; adenosylcobalamin biosynthesis. In terms of biological role, converts cobyric acid to cobinamide by the addition of aminopropanol on the F carboxylic group. The protein is Probable cobalamin biosynthesis protein CobD of Methanococcus aeolicus (strain ATCC BAA-1280 / DSM 17508 / OCM 812 / Nankai-3).